The primary structure comprises 276 residues: N-acyl homoserine lactonase AiiB (276 aa).

Zn(2+)-binding residues include His111, His113, His116, His191, Asp213, and His259.

Belongs to the metallo-beta-lactamase superfamily. Zn(2+) is required as a cofactor.

It carries out the reaction an N-acyl-L-homoserine lactone + H2O = an N-acyl-L-homoserine + H(+). The protein is N-acyl homoserine lactonase AiiB of Rhizobium rhizogenes (strain K84 / ATCC BAA-868) (Agrobacterium radiobacter).